The primary structure comprises 43 residues: Protein PsbN 1 (43 aa).

A helical membrane pass occupies residues 3–23 (TATILGILIAAAVVGITVLAL).

This sequence belongs to the PsbN family.

The protein resides in the cellular thylakoid membrane. May play a role in photosystem I and II biogenesis. This Microcystis aeruginosa (strain NIES-843 / IAM M-2473) protein is Protein PsbN 1.